Here is a 955-residue protein sequence, read N- to C-terminus: UPF0182 protein tll1193 (955 aa).

The next 9 helical transmembrane spans lie at 6-26 (VVPLMPPWLRWLCGLVLAIAL), 53-73 (WSVQALLFLAVAGVSQLFYGC), 98-118 (GLGLWQLLLCAGSLNWLLIVA), 163-183 (WLLGLSLVAVILGLWLPVGLF), 186-206 (LGILLSLAMGAIASLSWPVVL), 240-260 (LWLVNLSVVGLGGTTLGYLLA), 280-300 (LQGLSAFVFATVALSFWLERY), 324-344 (LYGWLSASAFGVACLLAWSAI), and 354-374 (GPIAPGLFGFTLGYLGVILIV).

This sequence belongs to the UPF0182 family.

It localises to the cell membrane. This Thermosynechococcus vestitus (strain NIES-2133 / IAM M-273 / BP-1) protein is UPF0182 protein tll1193.